Reading from the N-terminus, the 371-residue chain is Histidinol-phosphate aminotransferase (371 aa).

Lysine 228 is modified (N6-(pyridoxal phosphate)lysine).

This sequence belongs to the class-II pyridoxal-phosphate-dependent aminotransferase family. Histidinol-phosphate aminotransferase subfamily. Pyridoxal 5'-phosphate is required as a cofactor.

It carries out the reaction L-histidinol phosphate + 2-oxoglutarate = 3-(imidazol-4-yl)-2-oxopropyl phosphate + L-glutamate. It functions in the pathway amino-acid biosynthesis; L-histidine biosynthesis; L-histidine from 5-phospho-alpha-D-ribose 1-diphosphate: step 7/9. The chain is Histidinol-phosphate aminotransferase from Methanococcus maripaludis (strain C7 / ATCC BAA-1331).